A 308-amino-acid chain; its full sequence is Protein translocase subunit SecF (308 aa).

A run of 6 helical transmembrane segments spans residues 22-42, 140-160, 164-184, 194-214, 246-266, and 272-292; these read AVSY…IGIY, IEAG…YIWV, WYFG…ALGF, LSTI…SVVI, ILTV…GGEA, and VLVF…SAPI.

This sequence belongs to the SecD/SecF family. SecF subfamily. As to quaternary structure, forms a complex with SecD. Part of the essential Sec protein translocation apparatus which comprises SecA, SecYEG and auxiliary proteins SecDF-YajC and YidC.

The protein localises to the cell inner membrane. In terms of biological role, part of the Sec protein translocase complex. Interacts with the SecYEG preprotein conducting channel. SecDF uses the proton motive force (PMF) to complete protein translocation after the ATP-dependent function of SecA. The sequence is that of Protein translocase subunit SecF from Rickettsia akari (strain Hartford).